We begin with the raw amino-acid sequence, 451 residues long: tRNA-2-methylthio-N(6)-dimethylallyladenosine synthase (451 aa).

Residues 6 to 122 form the MTTase N-terminal domain; it reads RHYHITTFGC…LQDLLEQVFN (117 aa). Residues Cys-15, Cys-51, Cys-85, Cys-157, Cys-161, and Cys-164 each coordinate [4Fe-4S] cluster. In terms of domain architecture, Radical SAM core spans 143-380; that stretch reads RDSKITAWVN…NHLVGVKAAD (238 aa). Residues 383–447 form the TRAM domain; the sequence is QRYMGRIEEV…PFSLTGEVKE (65 aa).

This sequence belongs to the methylthiotransferase family. MiaB subfamily. Monomer. It depends on [4Fe-4S] cluster as a cofactor.

It localises to the cytoplasm. It catalyses the reaction N(6)-dimethylallyladenosine(37) in tRNA + (sulfur carrier)-SH + AH2 + 2 S-adenosyl-L-methionine = 2-methylsulfanyl-N(6)-dimethylallyladenosine(37) in tRNA + (sulfur carrier)-H + 5'-deoxyadenosine + L-methionine + A + S-adenosyl-L-homocysteine + 2 H(+). In terms of biological role, catalyzes the methylthiolation of N6-(dimethylallyl)adenosine (i(6)A), leading to the formation of 2-methylthio-N6-(dimethylallyl)adenosine (ms(2)i(6)A) at position 37 in tRNAs that read codons beginning with uridine. The polypeptide is tRNA-2-methylthio-N(6)-dimethylallyladenosine synthase (Trichodesmium erythraeum (strain IMS101)).